Consider the following 320-residue polypeptide: MNDRVKVAIIGPGNIGTDLMIKIMRNGRHLKMGAMVGVDPNSEGLARAARMDVATTAEGIDGLLRLDVFKEIDIVFDATSAGAHGRHNELLQAHGVQVIDLTPAAIGPYVIPSINLEEENATNMNMVTCGGQATIPIVAAVSRIAKVHYAEIVASISSRSAGPGTRANIDEFTETTRAAIEKLGGAERGKAIIVLNPAEPPLIMRDTVFVLSENAEPAAIEASIAEMVSSVQEYVPGYRLKQSVQFDAVPPDMPLNVPGIGPRHGLKTSVFLEVEGAAHYLPSYAGNLDIMTSAALACGDMMARRRMAAGIARGFKETAR.

The active-site Acyl-thioester intermediate is the Cys129. NAD(+) contacts are provided by residues 160 to 168 (SAGPGTRAN) and Asn287.

It belongs to the acetaldehyde dehydrogenase family.

It carries out the reaction acetaldehyde + NAD(+) + CoA = acetyl-CoA + NADH + H(+). The protein is Acetaldehyde dehydrogenase 2 of Burkholderia cenocepacia (strain ATCC BAA-245 / DSM 16553 / LMG 16656 / NCTC 13227 / J2315 / CF5610) (Burkholderia cepacia (strain J2315)).